The chain runs to 416 residues: UV excision repair protein RAD23 homolog B (416 aa).

The Ubiquitin-like domain maps to 1 to 79 (MQVTLKTLQQ…VVVMVTKPKA (79 aa)). Residues 83 to 111 (AVPATTQPSSTPSPTAVSSSPAVAAAQAP) show a composition bias toward low complexity. The interval 83–175 (AVPATTQPSS…STPGDSSRSN (93 aa)) is disordered. Pro residues predominate over residues 112–121 (APTPALPPTS). Residues 122 to 143 (TPASTAPASTTASSEPAPAGAT) show a composition bias toward low complexity. A Phosphothreonine modification is found at threonine 155. 2 positions are modified to phosphoserine: serine 160 and serine 174. Threonine 186 carries the phosphothreonine modification. Residues 188–228 (QSYENMVTEIMSMGYEREQVIAALRASFNNPDRAVEYLLMG) enclose the UBA 1 domain. Serine 199 is modified (phosphoserine). Phosphotyrosine is present on tyrosine 202. The STI1 domain occupies 274-317 (HPLEFLRNQPQFQQMRQIIQQNPSLLPALLQQIGRENPQLLQQI). A disordered region spans residues 333–356 (QEAGSQGGGGGGGGGGGGGGGGGI). Over residues 337–356 (SQGGGGGGGGGGGGGGGGGI) the composition is skewed to gly residues. A UBA 2 domain is found at 371-411 (PQEKEAIERLKALGFPEGLVIQAYFACEKNENLAANFLLQQ).

The protein belongs to the RAD23 family. In terms of assembly, component of the XPC complex composed of XPC, RAD23B and CETN2. Interacts with NGLY1 and PSMC1. Interacts with ATXN3. Interacts with AMFR. Interacts with VCP; the interaction is indirect and mediated by NGLY1.

Its subcellular location is the nucleus. It localises to the cytoplasm. Its function is as follows. Multiubiquitin chain receptor involved in modulation of proteasomal degradation. Binds to polyubiquitin chains. Proposed to be capable to bind simultaneously to the 26S proteasome and to polyubiquitinated substrates and to deliver ubiquitinated proteins to the proteasome. May play a role in endoplasmic reticulum-associated degradation (ERAD) of misfolded glycoproteins by association with PNGase and delivering deglycosylated proteins to the proteasome. Involved in global genome nucleotide excision repair (GG-NER) by acting as component of the XPC complex. Cooperatively with Cetn2 appears to stabilize Xpc. May protect Xpc from proteasomal degradation. In terms of biological role, the XPC complex is proposed to represent the first factor bound at the sites of DNA damage and together with other core recognition factors, Xpa, RPA and the TFIIH complex, is part of the pre-incision (or initial recognition) complex. The XPC complex recognizes a wide spectrum of damaged DNA characterized by distortions of the DNA helix such as single-stranded loops, mismatched bubbles or single-stranded overhangs. The orientation of XPC complex binding appears to be crucial for inducing a productive NER. XPC complex is proposed to recognize and to interact with unpaired bases on the undamaged DNA strand which is followed by recruitment of the TFIIH complex and subsequent scanning for lesions in the opposite strand in a 5'-to-3' direction by the NER machinery. Cyclobutane pyrimidine dimers (CPDs) which are formed upon UV-induced DNA damage esacpe detection by the XPC complex due to a low degree of structural perurbation. Instead they are detected by the UV-DDB complex which in turn recruits and cooperates with the XPC complex in the respective DNA repair. In vitro, the Xpc:Rad23b dimer is sufficient to initiate NER; it preferentially binds to cisplatin and UV-damaged double-stranded DNA and also binds to a variety of chemically and structurally diverse DNA adducts. Xpc:Rad23b contacts DNA both 5' and 3' of a cisplatin lesion with a preference for the 5' side. Xpc:Rad23bB induces a bend in DNA upon binding. Xpc:Rad23b stimulates the activity of DNA glycosylases Tdg and Smug1. The chain is UV excision repair protein RAD23 homolog B (Rad23b) from Mus musculus (Mouse).